Reading from the N-terminus, the 674-residue chain is Methionine--tRNA ligase (674 aa).

Positions 12-22 match the 'HIGH' region motif; it reads PYANGPIHLGH. The Zn(2+) site is built by Cys-143, Cys-146, Cys-156, and Cys-159. The 'KMSKS' region motif lies at 328–332; it reads KMSKS. Residue Lys-331 participates in ATP binding. The tRNA-binding domain maps to 573 to 674; it reads SFAKLDLRIA…EGARPGMRVK (102 aa).

Belongs to the class-I aminoacyl-tRNA synthetase family. MetG type 1 subfamily. As to quaternary structure, homodimer. Zn(2+) serves as cofactor.

Its subcellular location is the cytoplasm. The enzyme catalyses tRNA(Met) + L-methionine + ATP = L-methionyl-tRNA(Met) + AMP + diphosphate. Its function is as follows. Is required not only for elongation of protein synthesis but also for the initiation of all mRNA translation through initiator tRNA(fMet) aminoacylation. This is Methionine--tRNA ligase from Nitrosococcus oceani (strain ATCC 19707 / BCRC 17464 / JCM 30415 / NCIMB 11848 / C-107).